A 496-amino-acid chain; its full sequence is Probable serine/threonine-protein kinase DDB_G0284251 (496 aa).

Residues 1-13 (MIEINNNHNNGNG) are compositionally biased toward low complexity. The disordered stretch occupies residues 1-25 (MIEINNNHNNGNGKQFPSSQIMPDS). In terms of domain architecture, Protein kinase spans 36-288 (YTLGEKIGRG…AQELLQHPIF (253 aa)). ATP is bound by residues 42–50 (IGRGAFGQV) and K65. Residue D158 is the Proton acceptor of the active site. The disordered stretch occupies residues 323–345 (DWGSSSSTSGSSTPLSSSSSSSN). A coiled-coil region spans residues 353 to 386 (EDFNKLQTTIKQQAQTISNLSEEILILKKELKEK). The tract at residues 454 to 496 (PQLTPSSSRENISLSNSSSSIPNPNQNQNQNNKSKSKKFGFFS) is disordered. Residues 458–486 (PSSSRENISLSNSSSSIPNPNQNQNQNNK) are compositionally biased toward low complexity. Residues 487-496 (SKSKKFGFFS) are compositionally biased toward basic residues.

This sequence belongs to the protein kinase superfamily. STE Ser/Thr protein kinase family. Mg(2+) is required as a cofactor.

It catalyses the reaction L-seryl-[protein] + ATP = O-phospho-L-seryl-[protein] + ADP + H(+). It carries out the reaction L-threonyl-[protein] + ATP = O-phospho-L-threonyl-[protein] + ADP + H(+). The chain is Probable serine/threonine-protein kinase DDB_G0284251 from Dictyostelium discoideum (Social amoeba).